Consider the following 185-residue polypeptide: Ribosome-recycling factor (185 aa).

This sequence belongs to the RRF family.

The protein resides in the cytoplasm. In terms of biological role, responsible for the release of ribosomes from messenger RNA at the termination of protein biosynthesis. May increase the efficiency of translation by recycling ribosomes from one round of translation to another. The chain is Ribosome-recycling factor from Pseudarthrobacter chlorophenolicus (strain ATCC 700700 / DSM 12829 / CIP 107037 / JCM 12360 / KCTC 9906 / NCIMB 13794 / A6) (Arthrobacter chlorophenolicus).